Here is a 349-residue protein sequence, read N- to C-terminus: tRNA pseudouridine synthase D (349 aa).

F26 lines the substrate pocket. D79 functions as the Nucleophile in the catalytic mechanism. N128 serves as a coordination point for substrate. The TRUD domain maps to 154–302 (GVPNYFGSQR…VEGSRRAVLL (149 aa)). F328 provides a ligand contact to substrate.

The protein belongs to the pseudouridine synthase TruD family.

The catalysed reaction is uridine(13) in tRNA = pseudouridine(13) in tRNA. Its function is as follows. Responsible for synthesis of pseudouridine from uracil-13 in transfer RNAs. The polypeptide is tRNA pseudouridine synthase D (Yersinia pestis bv. Antiqua (strain Antiqua)).